The primary structure comprises 641 residues: SUMO-activating enzyme subunit 2-B (641 aa).

ATP-binding positions include Gly24–Gly29, Asp48, Asn56–Arg59, Lys72, Ser95–Ile96, and Asp117–Arg122. 2 residues coordinate Zn(2+): Cys158 and Cys161. Cys173 serves as the catalytic Glycyl thioester intermediate. Zn(2+) contacts are provided by Cys439 and Cys442. The tract at residues Gly546–Asp641 is disordered. The span at Val548–Val561 shows a compositional bias: basic and acidic residues. Polar residues predominate over residues Lys562–Ala579. 2 stretches are compositionally biased toward acidic residues: residues Gln582 to Ser594 and Pro630 to Asp641.

The protein belongs to the ubiquitin-activating E1 family. Heterodimer of sae1 and uba2/sae2. The heterodimer corresponds to the two domains that are encoded on a single polypeptide chain in ubiquitin-activating enzyme E1. Interacts with ube2i.

Its subcellular location is the nucleus. The protein operates within protein modification; protein sumoylation. Its function is as follows. The heterodimer acts as an E1 ligase for sumo1, sumo2, and sumo3. It mediates ATP-dependent activation of sumo proteins followed by formation of a thioester bond between a sumo protein and a conserved active site cysteine residue on uba2/sae2. The chain is SUMO-activating enzyme subunit 2-B (uba2-b) from Xenopus laevis (African clawed frog).